The chain runs to 395 residues: MMILGNLRVATLSDGYGLIPDAAILIEGDRIQWVGPEAHLPPSAAPRHDMGGRLCTPALIDCHTHAVFAGTRAAEFEMRLKGASYAEVAAAGGGIVSTVMATRAASADELLAASLPRIDAMLAGGVGTVEIKSGYGLDIETELRMLRVARRIGQLRKVRVRTSFLGAHAVPPDYRGRPDAYLAEVVLPALKVAQDEGLVDAVDAFCEGIAFSPAQIAHLFAQAHKLRLPVKLHAEQLSNLGGAALAARHDALSADHLEYLDAEGVAALAAAGTVAVLLPGAFYALRETQAPPVAALRAAGVPMAVATDLNPGTSPLGALGLAMNMACTLFRLTPEEALAGTTIHAARALGLSDIGRIAPGFRADLAIWEAEHPAELSWRIGPAPLHVRLHEGEFV.

2 residues coordinate Fe(3+): H63 and H65. Zn(2+) contacts are provided by H63 and H65. 3 residues coordinate 4-imidazolone-5-propanoate: R72, Y135, and H168. Y135 provides a ligand contact to N-formimidoyl-L-glutamate. Residue H233 participates in Fe(3+) binding. A Zn(2+)-binding site is contributed by H233. Q236 provides a ligand contact to 4-imidazolone-5-propanoate. D308 serves as a coordination point for Fe(3+). D308 contacts Zn(2+). Residues N310 and G312 each contribute to the N-formimidoyl-L-glutamate site. T313 contacts 4-imidazolone-5-propanoate.

It belongs to the metallo-dependent hydrolases superfamily. HutI family. Zn(2+) serves as cofactor. The cofactor is Fe(3+).

The protein localises to the cytoplasm. It catalyses the reaction 4-imidazolone-5-propanoate + H2O = N-formimidoyl-L-glutamate. It participates in amino-acid degradation; L-histidine degradation into L-glutamate; N-formimidoyl-L-glutamate from L-histidine: step 3/3. In terms of biological role, catalyzes the hydrolytic cleavage of the carbon-nitrogen bond in imidazolone-5-propanoate to yield N-formimidoyl-L-glutamate. It is the third step in the universal histidine degradation pathway. This chain is Imidazolonepropionase, found in Cereibacter sphaeroides (strain KD131 / KCTC 12085) (Rhodobacter sphaeroides).